Here is a 421-residue protein sequence, read N- to C-terminus: Probable indole-3-pyruvate monooxygenase YUCCA9 (421 aa).

An FAD-binding site is contributed by 29–34 (GAGPSG). Residue 196-201 (GCGNSG) coordinates NADP(+).

It belongs to the FMO family. FAD is required as a cofactor.

It catalyses the reaction indole-3-pyruvate + NADPH + O2 + H(+) = (indol-3-yl)acetate + CO2 + NADP(+) + H2O. It participates in plant hormone metabolism; auxin biosynthesis. In terms of biological role, involved in auxin biosynthesis. Belongs to the set of redundant YUCCA genes probably responsible for auxin biosynthesis in roots. The protein is Probable indole-3-pyruvate monooxygenase YUCCA9 (YUC9) of Arabidopsis thaliana (Mouse-ear cress).